The following is a 290-amino-acid chain: ATP synthase gamma chain (290 aa).

Belongs to the ATPase gamma chain family. As to quaternary structure, F-type ATPases have 2 components, CF(1) - the catalytic core - and CF(0) - the membrane proton channel. CF(1) has five subunits: alpha(3), beta(3), gamma(1), delta(1), epsilon(1). CF(0) has three main subunits: a, b and c.

The protein resides in the cell inner membrane. Its function is as follows. Produces ATP from ADP in the presence of a proton gradient across the membrane. The gamma chain is believed to be important in regulating ATPase activity and the flow of protons through the CF(0) complex. The protein is ATP synthase gamma chain of Anaeromyxobacter dehalogenans (strain 2CP-1 / ATCC BAA-258).